The primary structure comprises 498 residues: Glycerol kinase (498 aa).

T12 provides a ligand contact to ADP. ATP-binding residues include T12, T13, and S14. T12 contributes to the sn-glycerol 3-phosphate binding site. R16 is a binding site for ADP. Residues R82, Y134, and D243 each contribute to the sn-glycerol 3-phosphate site. The glycerol site is built by R82, Y134, D243, and Q244. ADP-binding residues include T265 and G308. 4 residues coordinate ATP: T265, G308, Q312, and G411. G411 provides a ligand contact to ADP.

Belongs to the FGGY kinase family.

The enzyme catalyses glycerol + ATP = sn-glycerol 3-phosphate + ADP + H(+). It functions in the pathway polyol metabolism; glycerol degradation via glycerol kinase pathway; sn-glycerol 3-phosphate from glycerol: step 1/1. Inhibited by fructose 1,6-bisphosphate (FBP). Functionally, key enzyme in the regulation of glycerol uptake and metabolism. Catalyzes the phosphorylation of glycerol to yield sn-glycerol 3-phosphate. The protein is Glycerol kinase of Brucella suis (strain ATCC 23445 / NCTC 10510).